Consider the following 103-residue polypeptide: Large ribosomal subunit protein bL21 (103 aa).

This sequence belongs to the bacterial ribosomal protein bL21 family. Part of the 50S ribosomal subunit. Contacts protein L20.

This protein binds to 23S rRNA in the presence of protein L20. This Escherichia coli O127:H6 (strain E2348/69 / EPEC) protein is Large ribosomal subunit protein bL21.